A 431-amino-acid chain; its full sequence is tRNA(Ile)-lysidine synthase (431 aa).

19-24 (STGIDS) contacts ATP.

Belongs to the tRNA(Ile)-lysidine synthase family.

Its subcellular location is the cytoplasm. The catalysed reaction is cytidine(34) in tRNA(Ile2) + L-lysine + ATP = lysidine(34) in tRNA(Ile2) + AMP + diphosphate + H(+). Its function is as follows. Ligates lysine onto the cytidine present at position 34 of the AUA codon-specific tRNA(Ile) that contains the anticodon CAU, in an ATP-dependent manner. Cytidine is converted to lysidine, thus changing the amino acid specificity of the tRNA from methionine to isoleucine. This is tRNA(Ile)-lysidine synthase from Staphylococcus aureus (strain MRSA252).